Consider the following 947-residue polypeptide: Serine-aspartate repeat-containing protein C (947 aa).

Positions 1 to 50 (MNNKKTATNRKGMIPNRLNKFSIRKYSVGTASILVGTTLIFGLSGHEAKA) are cleaved as a signal peptide. The disordered stretch occupies residues 51–164 (AEHTNGELNQ…STTPKTTTIK (114 aa)). Positions 51 to 495 (AEHTNGELNQ…GSSTANGDQK (445 aa)) are ligand binding A region. Polar residues predominate over residues 56–71 (GELNQSKNETTAPSEN). Residues 72 to 83 (KTTKKVDSRQLK) are compositionally biased toward basic and acidic residues. Polar residues predominate over residues 84–155 (DNTQTATADQ…SNLTQAKDVS (72 aa)). CNA-B domains follow at residues 496–606 (KYNL…YKTP) and 607–717 (KYSL…EEET). Positions 678–927 (TQTGTNTTED…NNSNNGTLFG (250 aa)) are disordered. Acidic residues-rich tracts occupy residues 685–695 (TEDDKDADGGE) and 712–886 (YYEE…DSDS). Positions 910 to 914 (LPETG) match the LPXTG sorting signal motif. A compositionally biased stretch (low complexity) spans 912-927 (ETGSENNNSNNGTLFG). Thr-913 carries the post-translational modification Pentaglycyl murein peptidoglycan amidated threonine. Positions 914-947 (GSENNNSNNGTLFGGLFAALGSLLLFGRRKKQNK) are cleaved as a propeptide — removed by sortase.

It belongs to the serine-aspartate repeat-containing protein (SDr) family. Homodimerizes; via N2-Domain. Interacts with host NRXN1; this interaction mediates bacterial attachment to host cells.

It localises to the secreted. It is found in the cell wall. Cell surface-associated calcium-binding protein which plays an important role in adhesion and pathogenesis. Mediates interactions with components of the extracellular matrix such as host NRXN1 to promote bacterial adhesion. The sequence is that of Serine-aspartate repeat-containing protein C (sdrC) from Staphylococcus aureus (strain COL).